We begin with the raw amino-acid sequence, 282 residues long: MGEHNLLNPGFVGPLVNIHTGDTFYFPNFRASGAQLPGLPSLSYPRRDNVCSLSWPSAEPCNGYPQPYLGSPVSLNPPFGRTCELARVEDGKGYYREPCAEGGGGGLKREERGRDPGAGPGAALLPLEPSGPPALGFKYDYAAGGGGGDGGGGAGPPHDPPSCQSLESDSSSSLLNEGNKGAGAGDPGSLVSPLNPGGGLSASGAPWYPINSRSRKKRKPYSKLQLAELEGEFLVNEFITRQRRRELSDRLNLSDQQVKIWFQNRRMKKKRLLLREQALSFF.

2 disordered regions span residues 94–129 (YYRE…PLEP) and 147–214 (GGDG…NSRS). Residues 162 to 175 (SCQSLESDSSSSLL) show a composition bias toward low complexity. Residues 214 to 273 (SRKKRKPYSKLQLAELEGEFLVNEFITRQRRRELSDRLNLSDQQVKIWFQNRRMKKKRLL) constitute a DNA-binding region (homeobox).

The protein belongs to the Abd-B homeobox family.

It localises to the nucleus. Sequence-specific transcription factor which is part of a developmental regulatory system that provides cells with specific positional identities on the anterior-posterior axis. In Homo sapiens (Human), this protein is Homeobox protein Hox-C12 (HOXC12).